The chain runs to 369 residues: Peptide chain release factor 2 (369 aa).

At Q249 the chain carries N5-methylglutamine.

This sequence belongs to the prokaryotic/mitochondrial release factor family. Post-translationally, methylated by PrmC. Methylation increases the termination efficiency of RF2.

It localises to the cytoplasm. Functionally, peptide chain release factor 2 directs the termination of translation in response to the peptide chain termination codons UGA and UAA. The chain is Peptide chain release factor 2 from Thermosipho melanesiensis (strain DSM 12029 / CIP 104789 / BI429).